The following is a 290-amino-acid chain: L-cysteine S-thiosulfotransferase subunit SoxA (290 aa).

Positions 1 to 26 are cleaved as a signal peptide; sequence MPRFTKTKGTLAATALGLALAGAAFA. Residues aspartate 78 and aspartate 81 each contribute to the Zn(2+) site. One can recognise a Cytochrome c domain in the interval 78 to 171; it reads DDFDNPAMVF…DMLSLISLQS (94 aa). 4 residues coordinate heme c: cysteine 106, cysteine 109, histidine 110, and cysteine 143. Residue histidine 190 participates in Zn(2+) binding. Cysteine 206, cysteine 209, and histidine 210 together coordinate heme c. Arginine 247 contributes to the substrate binding site. Residue cysteine 251 participates in heme c binding. Cysteine 251 functions as the Cysteine persulfide intermediate in the catalytic mechanism. Aspartate 266 is a binding site for Zn(2+).

Belongs to the SoxA family. Heterodimer of SoxA and SoxX. Heme c is required as a cofactor. Zn(2+) serves as cofactor. Post-translationally, cysteine persulfide at Cys-251.

The protein localises to the periplasm. The catalysed reaction is L-cysteinyl-[SoxY protein] + thiosulfate + 2 Fe(III)-[cytochrome c] = S-sulfosulfanyl-L-cysteinyl-[SoxY protein] + 2 Fe(II)-[cytochrome c] + 2 H(+). It carries out the reaction S-sulfanyl-L-cysteinyl-[SoxY protein] + thiosulfate + 2 Fe(III)-[cytochrome c] = S-(2-sulfodisulfanyl)-L-cysteinyl-[SoxY protein] + 2 Fe(II)-[cytochrome c] + 2 H(+). In terms of biological role, C-type diheme cytochrome, which is part of the SoxAX cytochrome complex involved in sulfur oxidation. The SoxAX complex catalyzes the formation of a heterodisulfide bond between the conserved cysteine residue on a sulfur carrier SoxYZ complex subunit SoxY and thiosulfate or other inorganic sulfur substrates. This leads to the liberation of two electrons, which may be transferred from the SoxAX complex to another cytochrome c that then channels them into the respiratory electron transport chain. Some electrons may be used for reductive CO(2) fixation. The polypeptide is L-cysteine S-thiosulfotransferase subunit SoxA (Paracoccus pantotrophus (Thiosphaera pantotropha)).